The chain runs to 577 residues: Acyl-coenzyme A synthetase ACSM2A, mitochondrial (577 aa).

A mitochondrion-targeting transit peptide spans 1 to 46 (MHWLRKVQGLCTLWGTQMSSRTLYINSRQLVSLQWGHQEVPAKFNF). Position 139 (Q139) interacts with CoA. ATP contacts are provided by residues 221 to 229 (TSGTSGLPK), 359 to 364 (ESYGQT), D446, and R461. T364 contacts substrate. Position 469 to 471 (469 to 471 (SGY)) interacts with CoA. A substrate-binding site is contributed by R472. Residue R501 coordinates CoA. Position 513 is a phosphoserine (S513). CoA contacts are provided by residues K532 and 540–542 (YPR). K557 is an ATP binding site.

The protein belongs to the ATP-dependent AMP-binding enzyme family. In terms of assembly, monomer. Mg(2+) is required as a cofactor. The cofactor is Mn(2+).

It is found in the mitochondrion. The catalysed reaction is a medium-chain fatty acid + ATP + CoA = a medium-chain fatty acyl-CoA + AMP + diphosphate. The enzyme catalyses benzoate + ATP + CoA = benzoyl-CoA + AMP + diphosphate. It carries out the reaction hexanoate + ATP + CoA = hexanoyl-CoA + AMP + diphosphate. It catalyses the reaction butanoate + ATP + CoA = butanoyl-CoA + AMP + diphosphate. The catalysed reaction is octanoate + ATP + CoA = octanoyl-CoA + AMP + diphosphate. The enzyme catalyses decanoate + ATP + CoA = decanoyl-CoA + AMP + diphosphate. Its function is as follows. Catalyzes the activation of fatty acids by CoA to produce an acyl-CoA, the first step in fatty acid metabolism. Capable of activating medium-chain fatty acids (e.g. butyric (C4) to decanoic (C10) acids), and certain carboxylate-containing xenobiotics, e.g. benzoate. The polypeptide is Acyl-coenzyme A synthetase ACSM2A, mitochondrial (ACSM2A) (Homo sapiens (Human)).